A 216-amino-acid polypeptide reads, in one-letter code: Urease accessory protein UreG (216 aa).

A GTP-binding site is contributed by Gly-25–Thr-32.

It belongs to the SIMIBI class G3E GTPase family. UreG subfamily. As to quaternary structure, homodimer. UreD, UreF and UreG form a complex that acts as a GTP-hydrolysis-dependent molecular chaperone, activating the urease apoprotein by helping to assemble the nickel containing metallocenter of UreC. The UreE protein probably delivers the nickel.

It localises to the cytoplasm. Facilitates the functional incorporation of the urease nickel metallocenter. This process requires GTP hydrolysis, probably effectuated by UreG. The polypeptide is Urease accessory protein UreG (Burkholderia pseudomallei (strain 1710b)).